The primary structure comprises 225 residues: Transcriptional regulatory protein AfsQ1 (225 aa).

The Response regulatory domain occupies 3-116 (SLLLIEDDDA…VLDARIRAVL (114 aa)). At Asp-52 the chain carries 4-aspartylphosphate. Residues 124-223 (TDSASFGSLV…VRGVGYRLDP (100 aa)) constitute a DNA-binding region (ompR/PhoB-type).

Post-translationally, phosphorylated by AfsQ2.

It is found in the cytoplasm. Its subcellular location is the nucleoid. Functionally, forms part of a two-component regulatory system AfsQ1/AfsQ2 involved in secondary metabolism. This is Transcriptional regulatory protein AfsQ1 from Streptomyces coelicolor (strain ATCC BAA-471 / A3(2) / M145).